Consider the following 548-residue polypeptide: Chaperonin GroEL (548 aa).

ATP contacts are provided by residues 29–32, K50, 86–90, G416, and D497; these read TLGP and DGTTT.

It belongs to the chaperonin (HSP60) family. As to quaternary structure, forms a cylinder of 14 subunits composed of two heptameric rings stacked back-to-back. Interacts with the co-chaperonin GroES.

Its subcellular location is the cytoplasm. The enzyme catalyses ATP + H2O + a folded polypeptide = ADP + phosphate + an unfolded polypeptide.. Functionally, together with its co-chaperonin GroES, plays an essential role in assisting protein folding. The GroEL-GroES system forms a nano-cage that allows encapsulation of the non-native substrate proteins and provides a physical environment optimized to promote and accelerate protein folding. This chain is Chaperonin GroEL, found in Neorickettsia risticii (Ehrlichia risticii).